A 537-amino-acid chain; its full sequence is uncharacterized protein (537 aa).

The segment at 10-56 (HHDVEPQNVEEEPPLTGQTIVTEDKLETSAKDKKHESPSMSEDEEGS) is disordered. Over residues 31–46 (TEDKLETSAKDKKHES) the composition is skewed to basic and acidic residues. 12 consecutive transmembrane segments (helical) span residues 90-110 (FVAT…TACI), 133-153 (LFIV…DIFG), 156-176 (WVYV…ALAY), 180-200 (MMAI…ANVA), 213-233 (GFGI…GSPI), 243-263 (WFYW…VLCP), 313-333 (PIIM…FLYL), 348-368 (YMGA…VVML), 393-413 (FLIS…FAFT), 422-442 (SPLI…LAMI), 457-477 (IAAF…LGII), and 492-512 (AFIS…GHLI).

It belongs to the major facilitator superfamily. CAR1 family.

Its subcellular location is the endoplasmic reticulum. The protein resides in the golgi apparatus. The protein localises to the membrane. This is an uncharacterized protein from Schizosaccharomyces pombe (strain 972 / ATCC 24843) (Fission yeast).